Consider the following 121-residue polypeptide: DNA-directed RNA polymerase subunit omega (121 aa).

This sequence belongs to the RNA polymerase subunit omega family. As to quaternary structure, the RNAP catalytic core consists of 2 alpha, 1 beta, 1 beta' and 1 omega subunit. When a sigma factor is associated with the core the holoenzyme is formed, which can initiate transcription.

The enzyme catalyses RNA(n) + a ribonucleoside 5'-triphosphate = RNA(n+1) + diphosphate. In terms of biological role, promotes RNA polymerase assembly. Latches the N- and C-terminal regions of the beta' subunit thereby facilitating its interaction with the beta and alpha subunits. The chain is DNA-directed RNA polymerase subunit omega from Syntrophobacter fumaroxidans (strain DSM 10017 / MPOB).